Consider the following 165-residue polypeptide: Natriuretic peptide Na-NP (165 aa).

The signal sequence occupies residues Met1–Gly25. A propeptide spanning residues Lys26 to Gln83 is cleaved from the precursor. Basic and acidic residues predominate over residues Ser56–His68. 2 disordered regions span residues Ser56–Asp100 and Pro135–Ile165. Cysteines 94 and 110 form a disulfide. Positions Ile129–Ile165 are excised as a propeptide. Over residues Pro135–His149 the composition is skewed to basic and acidic residues. Residues Val154 to Ile165 show a composition bias toward gly residues.

It belongs to the natriuretic peptide family. As to expression, expressed by the venom gland.

Its subcellular location is the secreted. In terms of biological role, natriuretic peptide that dose-dependently induces the rapid relaxation of rat aortic strips phenylephrine-precontracted. Acts by stimulating cGMP production in a dose-dependent manner (by probably activating NPR1 and/or NPR2). May also show potent hypotensive effects. The polypeptide is Natriuretic peptide Na-NP (Naja atra (Chinese cobra)).